Reading from the N-terminus, the 186-residue chain is dCTP deaminase, dUMP-forming (186 aa).

Residues 99 to 104 (KSSIAR), D117, 125 to 127 (TLE), Q146, Y159, K166, and Q170 each bind dCTP. Catalysis depends on E127, which acts as the Proton donor/acceptor.

This sequence belongs to the dCTP deaminase family. In terms of assembly, homotrimer.

It catalyses the reaction dCTP + 2 H2O = dUMP + NH4(+) + diphosphate. It participates in pyrimidine metabolism; dUMP biosynthesis; dUMP from dCTP: step 1/1. Bifunctional enzyme that catalyzes both the deamination of dCTP to dUTP and the hydrolysis of dUTP to dUMP without releasing the toxic dUTP intermediate. This chain is dCTP deaminase, dUMP-forming, found in Methanosphaerula palustris (strain ATCC BAA-1556 / DSM 19958 / E1-9c).